The chain runs to 1007 residues: RNA-binding protein 26 (1007 aa).

Residue K94 forms a Glycyl lysine isopeptide (Lys-Gly) (interchain with G-Cter in SUMO2) linkage. A Glycyl lysine isopeptide (Lys-Gly) (interchain with G-Cter in SUMO1); alternate cross-link involves residue K106. A Glycyl lysine isopeptide (Lys-Gly) (interchain with G-Cter in SUMO2); alternate cross-link involves residue K106. Over residues 106 to 118 (KKEEITKEEEREK) the composition is skewed to basic and acidic residues. The disordered stretch occupies residues 106 to 241 (KKEEITKEEE…YTPVSSVPSI (136 aa)). Residue S127 is modified to Phosphoserine. Residues 134–168 (RYRENRSRDERKKDDRSRKRDYDRNPPRRDSYRDR) are compositionally biased toward basic and acidic residues. The segment covering 169 to 186 (YNRRRGRSRSYSRSRSRS) has biased composition (basic residues). Basic and acidic residues-rich tracts occupy residues 187–201 (WSKE…DRSR) and 209–227 (RSRE…RTDP). The segment covering 228-241 (LENNYTPVSSVPSI) has biased composition (polar residues). A C3H1-type zinc finger spans residues 288–316 (PMPKKRCRDYDEKGFCMRGDMCPFDHGSD). The span at 334–388 (QPPVVEGPPPPGLPPPPPILTPPPVNLRPPVPPPGPLPPSLPPVTGPPPPLPPLQ) shows a compositional bias: pro residues. 2 disordered regions span residues 334 to 404 (QPPV…SSVP) and 460 to 519 (IGLT…TNSP). Over residues 394–404 (APPNSATSSVP) the composition is skewed to low complexity. A Phosphoserine modification is found at S496. At K510 the chain carries N6-acetyllysine. The residue at position 518 (S518) is a Phosphoserine. An RRM 1 domain is found at 532–606 (TKLELRKVPP…RFIKVYWHRE (75 aa)). Phosphoserine is present on S616. Coiled-coil stretches lie at residues 719–795 (DNNE…KAAS) and 823–847 (KKMQ…EAAK). Residues 853 to 884 (SGRGRGIHSRGRGAVHGRGRGRGRGRGVPGHA) are disordered. A compositionally biased stretch (basic residues) spans 857 to 877 (RGIHSRGRGAVHGRGRGRGRG). In terms of domain architecture, RRM 2 spans 891–960 (RALEISAFTE…QDLKLAWNKP (70 aa)). Residues 966–1007 (AVETEEVEPDEEEFQEESLVDDSLLQDDDEEEEDNESRSWRR) are disordered. Over residues 968 to 1000 (ETEEVEPDEEEFQEESLVDDSLLQDDDEEEEDN) the composition is skewed to acidic residues.

In terms of biological role, may be involved in the turnover of nuclear polyadenylated (pA+) RNA. The sequence is that of RNA-binding protein 26 from Homo sapiens (Human).